The sequence spans 212 residues: Cell division protein YtfB (212 aa).

The chain crosses the membrane as a helical span at residues 34–50 (GIIIAAIVLVVGFLLPS). The tract at residues 88 to 127 (NDPDQVAPVAPEPIQEGQPEEQPQTTQTQPFQPDSGIDNQ) is disordered. Residues 99–120 (EPIQEGQPEEQPQTTQTQPFQP) show a composition bias toward low complexity. The interval 117 to 212 (PFQPDSGIDN…QPDGSFIRAR (96 aa)) is oapA.

Belongs to the OapA family.

Its subcellular location is the cell inner membrane. Cell division protein whose function is related to the generation of a transient cell wall structure. Function is linked to the late stages of cell division. This Escherichia coli (strain K12) protein is Cell division protein YtfB (ytfB).